A 270-amino-acid chain; its full sequence is 3-phenylpropionate-dihydrodiol/cinnamic acid-dihydrodiol dehydrogenase (270 aa).

Position 10 to 34 (10 to 34 (FITGGGSGLGLALVERFIEEGAQVA)) interacts with NAD(+). Ser-143 serves as a coordination point for substrate. Residue Tyr-156 is the Proton acceptor of the active site.

The protein belongs to the short-chain dehydrogenases/reductases (SDR) family.

The enzyme catalyses 3-(cis-5,6-dihydroxycyclohexa-1,3-dien-1-yl)propanoate + NAD(+) = 3-(2,3-dihydroxyphenyl)propanoate + NADH + H(+). It carries out the reaction (2E)-3-(cis-5,6-dihydroxycyclohexa-1,3-dien-1-yl)prop-2-enoate + NAD(+) = (2E)-3-(2,3-dihydroxyphenyl)prop-2-enoate + NADH + H(+). The protein operates within aromatic compound metabolism; 3-phenylpropanoate degradation. Converts 3-phenylpropionate-dihydrodiol (PP-dihydrodiol) and cinnamic acid-dihydrodiol (CI-dihydrodiol) into 3-(2,3-dihydroxylphenyl)propanoic acid (DHPP) and 2,3-dihydroxicinnamic acid (DHCI), respectively. This Shigella sonnei (strain Ss046) protein is 3-phenylpropionate-dihydrodiol/cinnamic acid-dihydrodiol dehydrogenase.